A 274-amino-acid polypeptide reads, in one-letter code: Pyrogallol hydroxytransferase small subunit (274 aa).

[4Fe-4S] cluster is bound by residues C13, C16, C19, C23, C68, C71, C76, C109, C126, C129, C145, and C149.

Heterodimer of a large and a small subunit. [4Fe-4S] cluster serves as cofactor.

It catalyses the reaction 1,2,3,5-tetrahydroxybenzene + 1,2,3-trihydroxybenzene = 1,2,3,5-tetrahydroxybenzene + 1,3,5-trihydroxybenzene. Functionally, isomerization of pyrogallol to phloroglucin. The polypeptide is Pyrogallol hydroxytransferase small subunit (bthL) (Pelobacter acidigallici).